Consider the following 960-residue polypeptide: Gamma-aminobutyric acid type B receptor subunit 1 (960 aa).

Residues 1–19 (MLLLLLVPLFLRPLGAGGA) form the signal peptide. Residues 20 to 590 (QTPNVTSEGC…KTFRFLSQKL (571 aa)) lie on the Extracellular side of the membrane. N-linked (GlcNAc...) asparagine glycosylation is found at N23 and N83. 2 Sushi domains span residues 29 to 95 (CQII…PSRC) and 97 to 158 (RICS…HCQV). Intrachain disulfides connect C99–C144, C130–C156, and C219–C245. 4-aminobutanoate-binding residues include S246, S269, H286, and Y366. The cysteines at positions 375 and 409 are disulfide-linked. Residues N408 and N439 are each glycosylated (N-linked (GlcNAc...) asparagine). E465 lines the 4-aminobutanoate pocket. Residues N481, N501, and N513 are each glycosylated (N-linked (GlcNAc...) asparagine). The chain crosses the membrane as a helical span at residues 591–611 (FISVSVLSSLGIVLAVVCLSF). Topologically, residues 612 to 630 (NIYNSHVRYIQNSQPNLNN) are cytoplasmic. A helical transmembrane segment spans residues 631–651 (LTAVGCSLALAAVFPLGLDGY). Residues 652 to 666 (HIGRSQFPFVCQARL) lie on the Extracellular side of the membrane. A helical membrane pass occupies residues 667-687 (WLLGLGFSLGYGSMFTKIWWV). The Cytoplasmic portion of the chain corresponds to 688 to 709 (HTVFTKKEEKKEWRKTLEPWKL). The helical transmembrane segment at 710-730 (YATVGLLVGMDILTLAIWQIV) threads the bilayer. Residues 731–767 (DPLHRTIETFAKEEPKEDIDVSILPQLEHCSSKKMNT) are Extracellular-facing. Residues 768–788 (WLGIFYGYKGLLLLLGIFLAY) traverse the membrane as a helical segment. Over 789 to 803 (ETKSVSTEKINDHRA) the chain is Cytoplasmic. The chain crosses the membrane as a helical span at residues 804–824 (VGMAIYNVAVLCLITAPVTMI). At 825 to 832 (LSSQQDAA) the chain is on the extracellular side. Residues 833-853 (FAFASLAIVFSSYITLVVLFV) traverse the membrane as a helical segment. At 854 to 960 (PKMRRLITRG…DGSRVHLLYK (107 aa)) the chain is on the cytoplasmic side. Disordered stretches follow at residues 866–891 (QSEA…RLLE) and 908–960 (VSEL…LLYK). Polar residues predominate over residues 867–879 (SEAQDTMKTGSST). Residues 868–924 (EAQDTMKTGSSTNNNEEEKSRLLEKENRELEKIIAEKEERVSELRHQLQSRQQIRSR) are a coiled coil. T872 is modified (phosphothreonine). Residues 887–915 (SRLLEKENRELEKIIAEKEERVSELRHQL) are interaction with ATF4. Position 929 is a phosphothreonine (T929).

It belongs to the G-protein coupled receptor 3 family. GABA-B receptor subfamily. As to quaternary structure, heterodimer of GABBR1 and GABBR2. Homodimers may form, but are inactive. Interacts (via C-terminus) with ATF4 (via leucine zipper domain). Interacts with JAKMIP1. Interacts with KCTD8, KCTD12, KCTD12B and KCTD16; this interaction determines the pharmacology and kinetics of the receptor response, the KCTD proteins markedly accelerating the GABA-B response, although to different extents. Expressed in neuronal tissue including cortex, cerebellum and spinal cord. Not detected in non-neuronal tissues including heart, liver, spleen and kidney.

Its subcellular location is the cell membrane. The protein localises to the postsynaptic cell membrane. It is found in the cell projection. It localises to the dendrite. Its function is as follows. Component of a heterodimeric G-protein coupled receptor for GABA, formed by GABBR1 and GABBR2. Within the heterodimeric GABA receptor, only GABBR1 seems to bind agonists, while GABBR2 mediates coupling to G proteins. Ligand binding causes a conformation change that triggers signaling via guanine nucleotide-binding proteins (G proteins) and modulates the activity of down-stream effectors, such as adenylate cyclase. Signaling inhibits adenylate cyclase, stimulates phospholipase A2, activates potassium channels, inactivates voltage-dependent calcium-channels and modulates inositol phospholipid hydrolysis. Calcium is required for high affinity binding to GABA. Plays a critical role in the fine-tuning of inhibitory synaptic transmission. Pre-synaptic GABA receptor inhibits neurotransmitter release by down-regulating high-voltage activated calcium channels, whereas postsynaptic GABA receptor decreases neuronal excitability by activating a prominent inwardly rectifying potassium (Kir) conductance that underlies the late inhibitory postsynaptic potentials. Not only implicated in synaptic inhibition but also in hippocampal long-term potentiation, slow wave sleep, muscle relaxation and antinociception. The sequence is that of Gamma-aminobutyric acid type B receptor subunit 1 (Gabbr1) from Mus musculus (Mouse).